The sequence spans 122 residues: Protein FLORAL ORGAN NUMBER2 (122 aa).

An N-terminal signal peptide occupies residues 1-25 (MGRLFLCLVVAWCWVALLLVAPVHG). A disordered region spans residues 28–122 (GLPGEFSGDQ…PEHARSTGRP (95 aa)). Residues 54 to 63 (KQPRGVKGTR) are compositionally biased toward basic residues. Over residues 64 to 77 (RPSWSSWSSTASRS) the composition is skewed to low complexity. Positions 111–122 (RRPEHARSTGRP) are enriched in basic and acidic residues.

It belongs to the CLV3/ESR signal peptide family.

Its subcellular location is the secreted. Probable extracellular signal that regulates meristem maintenance. May function as a putative ligand for a receptor complex including FON1. Regulates the size of the floral meristem and the number of floral organs. This is Protein FLORAL ORGAN NUMBER2 (FON2) from Oryza sativa subsp. indica (Rice).